A 469-amino-acid chain; its full sequence is Trigger factor (469 aa).

A PPIase FKBP-type domain is found at 162–243; the sequence is GDFVSIDLSA…VKSVKERELP (82 aa). The disordered stretch occupies residues 429-469; that stretch reads NTIDTSEFFGKHAQSDKADQKTEEADPNSDAIDEEVDEAAE. Basic and acidic residues predominate over residues 437 to 452; that stretch reads FGKHAQSDKADQKTEE. Over residues 453–469 the composition is skewed to acidic residues; the sequence is ADPNSDAIDEEVDEAAE.

This sequence belongs to the FKBP-type PPIase family. Tig subfamily.

The protein resides in the cytoplasm. The catalysed reaction is [protein]-peptidylproline (omega=180) = [protein]-peptidylproline (omega=0). In terms of biological role, involved in protein export. Acts as a chaperone by maintaining the newly synthesized protein in an open conformation. Functions as a peptidyl-prolyl cis-trans isomerase. The sequence is that of Trigger factor from Mycobacterium leprae (strain Br4923).